We begin with the raw amino-acid sequence, 387 residues long: Protein RecA (387 aa).

78–85 (GPESSGKT) is an ATP binding site. Residues 350–369 (QTREVKSIERDPKETKETKS) are compositionally biased toward basic and acidic residues. The segment at 350 to 387 (QTREVKSIERDPKETKETKSKQPVSFSTEAEVDIAVGE) is disordered.

It belongs to the RecA family.

It localises to the cytoplasm. Can catalyze the hydrolysis of ATP in the presence of single-stranded DNA, the ATP-dependent uptake of single-stranded DNA by duplex DNA, and the ATP-dependent hybridization of homologous single-stranded DNAs. It interacts with LexA causing its activation and leading to its autocatalytic cleavage. The sequence is that of Protein RecA from Leptospira meyeri.